An 88-amino-acid chain; its full sequence is RNA-binding protein Hfq (88 aa).

A Sm domain is found at 9-68; it reads DPFLNALRCERIPVSIYLVNGIKLQGQIESFDQFVILLKNTVNQMVYKHAISTVVPARAV. The interval 66–88 is disordered; that stretch reads RAVSHHTASDRPQGERPQETTEE. The span at 72 to 88 shows a compositional bias: basic and acidic residues; it reads TASDRPQGERPQETTEE.

It belongs to the Hfq family. Homohexamer.

In terms of biological role, RNA chaperone that binds small regulatory RNA (sRNAs) and mRNAs to facilitate mRNA translational regulation in response to envelope stress, environmental stress and changes in metabolite concentrations. Also binds with high specificity to tRNAs. This is RNA-binding protein Hfq from Aliivibrio salmonicida (strain LFI1238) (Vibrio salmonicida (strain LFI1238)).